The chain runs to 339 residues: Anthranilate phosphoribosyltransferase (339 aa).

5-phospho-alpha-D-ribose 1-diphosphate is bound by residues Gly-80, 83 to 84, Thr-88, 90 to 93, 108 to 116, and Ser-120; these read GD, NIST, and KHGNRAVSS. Gly-80 contacts anthranilate. Residue Ser-92 participates in Mg(2+) binding. Asn-111 provides a ligand contact to anthranilate. An anthranilate-binding site is contributed by Arg-166. Asp-225 and Glu-226 together coordinate Mg(2+).

The protein belongs to the anthranilate phosphoribosyltransferase family. In terms of assembly, homodimer. The cofactor is Mg(2+).

It carries out the reaction N-(5-phospho-beta-D-ribosyl)anthranilate + diphosphate = 5-phospho-alpha-D-ribose 1-diphosphate + anthranilate. The protein operates within amino-acid biosynthesis; L-tryptophan biosynthesis; L-tryptophan from chorismate: step 2/5. Functionally, catalyzes the transfer of the phosphoribosyl group of 5-phosphorylribose-1-pyrophosphate (PRPP) to anthranilate to yield N-(5'-phosphoribosyl)-anthranilate (PRA). The protein is Anthranilate phosphoribosyltransferase of Caldanaerobacter subterraneus subsp. tengcongensis (strain DSM 15242 / JCM 11007 / NBRC 100824 / MB4) (Thermoanaerobacter tengcongensis).